A 264-amino-acid polypeptide reads, in one-letter code: Glutamate racemase (264 aa).

Residues 10–11 and 42–43 contribute to the substrate site; these read DS and YG. Cysteine 73 acts as the Proton donor/acceptor in catalysis. A substrate-binding site is contributed by 74–75; it reads NT. Cysteine 183 acts as the Proton donor/acceptor in catalysis. A substrate-binding site is contributed by 184–185; the sequence is TH.

The protein belongs to the aspartate/glutamate racemases family. In terms of assembly, homodimer.

The catalysed reaction is L-glutamate = D-glutamate. The protein operates within cell wall biogenesis; peptidoglycan biosynthesis. Its function is as follows. Provides the (R)-glutamate required for cell wall biosynthesis. In Streptococcus pyogenes serotype M1, this protein is Glutamate racemase.